We begin with the raw amino-acid sequence, 505 residues long: 2,3-bisphosphoglycerate-independent phosphoglycerate mutase (505 aa).

Mn(2+) contacts are provided by D13 and S63. Residue S63 is the Phosphoserine intermediate of the active site. Substrate contacts are provided by residues H124, 153–154 (RD), R183, R189, 254–257 (RADR), and K330. D396, H400, D437, H438, and H456 together coordinate Mn(2+).

This sequence belongs to the BPG-independent phosphoglycerate mutase family. In terms of assembly, monomer. Mn(2+) is required as a cofactor.

It carries out the reaction (2R)-2-phosphoglycerate = (2R)-3-phosphoglycerate. It functions in the pathway carbohydrate degradation; glycolysis; pyruvate from D-glyceraldehyde 3-phosphate: step 3/5. Its function is as follows. Catalyzes the interconversion of 2-phosphoglycerate and 3-phosphoglycerate. This is 2,3-bisphosphoglycerate-independent phosphoglycerate mutase from Ruegeria pomeroyi (strain ATCC 700808 / DSM 15171 / DSS-3) (Silicibacter pomeroyi).